The primary structure comprises 127 residues: Large-conductance mechanosensitive channel (127 aa).

Helical transmembrane passes span 9–29 (EFAM…GVAF), 32–52 (IVTA…LGGI), and 75–95 (VIDF…INLL).

Belongs to the MscL family. In terms of assembly, homopentamer.

It localises to the cell inner membrane. In terms of biological role, channel that opens in response to stretch forces in the membrane lipid bilayer. May participate in the regulation of osmotic pressure changes within the cell. The protein is Large-conductance mechanosensitive channel of Legionella pneumophila subsp. pneumophila (strain Philadelphia 1 / ATCC 33152 / DSM 7513).